A 59-amino-acid chain; its full sequence is U-limacoditoxin(3)-Dv33 (59 aa).

The signal sequence occupies residues 1–19; that stretch reads MSKVILLCLIFALFACSIS.

The protein belongs to the limacoditoxin-3 family. The natural peptide is not amidated. The recombinant peptide is amidated. In terms of tissue distribution, expressed by the venom secretory cell of the spine. The spine is a cuticular structure containing a single large nucleated venom-secreting cell at its base. It is an independent unit capable of producing, storing and injecting venom. On the back of D.vulnerans caterpillars, spines are grouped together by 50 to 100 to form scoli, of which there are eight in D.vulnerans.

Its subcellular location is the secreted. Probable toxin. Shows a relatively potent antiparasitic activity against the major pathogenic nematode of ruminants (H.contortus, EC(50)=2.6 uM). Does not show insecticidal and antimicrobial activities. Does not induce increase in intracellular calcium in mouse DRG neurons, suggesting that it does not induce pain. This chain is U-limacoditoxin(3)-Dv33, found in Doratifera vulnerans (Mottled cup moth).